Here is a 396-residue protein sequence, read N- to C-terminus: Arginine biosynthesis bifunctional protein ArgJ (396 aa).

Positions 147, 173, 184, 270, 391, and 396 each coordinate substrate. T184 acts as the Nucleophile in catalysis.

This sequence belongs to the ArgJ family. Heterotetramer of two alpha and two beta chains.

The protein resides in the cytoplasm. The catalysed reaction is N(2)-acetyl-L-ornithine + L-glutamate = N-acetyl-L-glutamate + L-ornithine. It carries out the reaction L-glutamate + acetyl-CoA = N-acetyl-L-glutamate + CoA + H(+). The protein operates within amino-acid biosynthesis; L-arginine biosynthesis; L-ornithine and N-acetyl-L-glutamate from L-glutamate and N(2)-acetyl-L-ornithine (cyclic): step 1/1. It participates in amino-acid biosynthesis; L-arginine biosynthesis; N(2)-acetyl-L-ornithine from L-glutamate: step 1/4. In terms of biological role, catalyzes two activities which are involved in the cyclic version of arginine biosynthesis: the synthesis of N-acetylglutamate from glutamate and acetyl-CoA as the acetyl donor, and of ornithine by transacetylation between N(2)-acetylornithine and glutamate. The chain is Arginine biosynthesis bifunctional protein ArgJ from Lactococcus lactis subsp. lactis (strain IL1403) (Streptococcus lactis).